The primary structure comprises 292 residues: Probable 2-(5''-triphosphoribosyl)-3'-dephosphocoenzyme-A synthase (292 aa).

Belongs to the CitG/MdcB family.

The catalysed reaction is 3'-dephospho-CoA + ATP = 2'-(5''-triphospho-alpha-D-ribosyl)-3'-dephospho-CoA + adenine. This chain is Probable 2-(5''-triphosphoribosyl)-3'-dephosphocoenzyme-A synthase, found in Shigella boydii serotype 18 (strain CDC 3083-94 / BS512).